The chain runs to 603 residues: Carbon catabolite repressor protein 4 homolog 2 (603 aa).

The tract at residues 115–136 (ENNANEDDDLNRNNSAGSGSLA) is disordered. A compositionally biased stretch (low complexity) spans 126-136 (RNNSAGSGSLA). Glu302 contributes to the Mg(2+) binding site.

Belongs to the CCR4/nocturin family. In terms of assembly, component of the CCR4-NOT complex, at least composed of CRR4 and CAF1 proteins. Requires Mg(2+) as cofactor.

It localises to the nucleus. The protein localises to the cytoplasm. The enzyme catalyses Exonucleolytic cleavage of poly(A) to 5'-AMP.. Functionally, acts as a catalytic component of the CCR4-NOT core complex, which in the nucleus seems to be a general transcription factor, and in the cytoplasm the major mRNA deadenylase involved in mRNA turnover. This is Carbon catabolite repressor protein 4 homolog 2 (CCR4-2) from Arabidopsis thaliana (Mouse-ear cress).